Here is a 376-residue protein sequence, read N- to C-terminus: Chaperone protein DnaJ (376 aa).

Residues 5–69 (DYYEVLGISK…QKRAQYDQYG (65 aa)) enclose the J domain. The segment at 133 to 215 (GKDAEIEIPR…CHGKGRVTKT (83 aa)) adopts a CR-type zinc-finger fold. Residues cysteine 146, cysteine 149, cysteine 163, cysteine 166, cysteine 189, cysteine 192, cysteine 203, and cysteine 206 each coordinate Zn(2+). CXXCXGXG motif repeat units lie at residues 146–153 (CDTCHGSG), 163–170 (CSHCGGKG), 189–196 (CQYCNGTG), and 203–210 (CPTCHGKG).

Belongs to the DnaJ family. Homodimer. Requires Zn(2+) as cofactor.

The protein localises to the cytoplasm. Its function is as follows. Participates actively in the response to hyperosmotic and heat shock by preventing the aggregation of stress-denatured proteins and by disaggregating proteins, also in an autonomous, DnaK-independent fashion. Unfolded proteins bind initially to DnaJ; upon interaction with the DnaJ-bound protein, DnaK hydrolyzes its bound ATP, resulting in the formation of a stable complex. GrpE releases ADP from DnaK; ATP binding to DnaK triggers the release of the substrate protein, thus completing the reaction cycle. Several rounds of ATP-dependent interactions between DnaJ, DnaK and GrpE are required for fully efficient folding. Also involved, together with DnaK and GrpE, in the DNA replication of plasmids through activation of initiation proteins. This is Chaperone protein DnaJ from Listeria monocytogenes serotype 4a (strain HCC23).